Consider the following 179-residue polypeptide: Large ribosomal subunit protein uL5 (179 aa).

The protein belongs to the universal ribosomal protein uL5 family. Part of the 50S ribosomal subunit; part of the 5S rRNA/L5/L18/L25 subcomplex. Contacts the 5S rRNA and the P site tRNA. Forms a bridge to the 30S subunit in the 70S ribosome.

In terms of biological role, this is one of the proteins that bind and probably mediate the attachment of the 5S RNA into the large ribosomal subunit, where it forms part of the central protuberance. In the 70S ribosome it contacts protein S13 of the 30S subunit (bridge B1b), connecting the 2 subunits; this bridge is implicated in subunit movement. Contacts the P site tRNA; the 5S rRNA and some of its associated proteins might help stabilize positioning of ribosome-bound tRNAs. In Bacillus mycoides (strain KBAB4) (Bacillus weihenstephanensis), this protein is Large ribosomal subunit protein uL5.